Here is a 349-residue protein sequence, read N- to C-terminus: Macrophage-capping protein (349 aa).

Met-1 carries the N-acetylmethionine modification. Gelsolin-like repeat units lie at residues 28-107 (KLKP…DLFM), 147-222 (KNIR…AEMI), and 264-342 (LTKV…PIFK). The Nuclear localization signal motif lies at 138–147 (RKLYQVKGKK). Ser-338 is modified (phosphoserine).

Belongs to the villin/gelsolin family. Interacts with NUP62. Interacts with NUTF2 and RAN; involved in CAPG nuclear import. Post-translationally, phosphorylated.

The protein localises to the nucleus. Its subcellular location is the cytoplasm. It is found in the melanosome. The protein resides in the cell projection. It localises to the lamellipodium. The protein localises to the ruffle. In terms of biological role, calcium-sensitive protein which reversibly blocks the barbed ends of actin filaments but does not sever preformed actin filaments. May play an important role in macrophage function. May play a role in regulating cytoplasmic and/or nuclear structures through potential interactions with actin. May bind DNA. Uncapping occurs either when Ca(2+) falls or when the concentration of polyphosphoinositide rises, both at low and high Ca(2+). This Rattus norvegicus (Rat) protein is Macrophage-capping protein (Capg).